Consider the following 444-residue polypeptide: Protein giant-lens (444 aa).

The first 24 residues, 1-24 (MPTTLMLLPCMLLLLLTAAAVAVG), serve as a signal peptide directing secretion. Two-fingered domain 1 part repeat units lie at residues 123–165 (RDVR…CRCP) and 285–307 (CPSSLGVEDGHTIADKTRHYKMC). 8 disulfide bridges follow: C141–C162, C147–C285, C164–C307, C316–C341, C343–C370, C378–C405, C384–C413, and C407–C440. Two-fingered domain repeat units lie at residues 316–370 (CTHF…LFAC) and 378–444 (CQRK…MAND). N333 carries N-linked (GlcNAc...) asparagine glycosylation.

As to quaternary structure, interacts with spi. As to expression, during embryogenesis, expression is in a segmental pattern in the ectoderm and in the nervous system. In the eye imaginal disks, expression in photoreceptor cells begins a few rows posterior to the morphogenetic furrow. Also expressed in the wing disk. In the adult, expression is seen in the retina and lamina.

Its subcellular location is the secreted. Its function is as follows. Regulates cell determination; development of ommatidia and optic lobe. Is a signaling molecule involved in the process of axon pathfinding in the eye. Part of the Ras pathway regulating programmed cell death in pupal eyes; activated by lozenge (lz). Antagonist for the Egfr receptor (gurken). Inhibits Egfr signaling without interacting directly with the receptor, but instead by sequestering the Egfr-activating ligand spitz (spi). In Drosophila melanogaster (Fruit fly), this protein is Protein giant-lens (aos).